The chain runs to 359 residues: 5-formaminoimidazole-4-carboxamide-1-(beta)-D-ribofuranosyl 5'-monophosphate synthetase (359 aa).

The 5-amino-1-(5-phospho-beta-D-ribosyl)imidazole-4-carboxamide site is built by His-28 and Ser-95. Positions 115–346 (ELMIWETDRD…MGRRIAREIK (232 aa)) constitute an ATP-grasp domain. ATP contacts are provided by residues 144-206 (PEEI…ANIY) and Glu-228. A 5-amino-1-(5-phospho-beta-D-ribosyl)imidazole-4-carboxamide-binding site is contributed by Asn-256. 2 residues coordinate Mg(2+): Glu-295 and Glu-308.

Belongs to the phosphohexose mutase family. It depends on Mg(2+) as a cofactor. Mn(2+) is required as a cofactor.

The enzyme catalyses 5-amino-1-(5-phospho-beta-D-ribosyl)imidazole-4-carboxamide + formate + ATP = 5-formamido-1-(5-phospho-D-ribosyl)imidazole-4-carboxamide + ADP + phosphate. It participates in purine metabolism; IMP biosynthesis via de novo pathway; 5-formamido-1-(5-phospho-D-ribosyl)imidazole-4-carboxamide from 5-amino-1-(5-phospho-D-ribosyl)imidazole-4-carboxamide (formate route): step 1/1. Functionally, catalyzes the ATP- and formate-dependent formylation of 5-aminoimidazole-4-carboxamide-1-beta-d-ribofuranosyl 5'-monophosphate (AICAR) to 5-formaminoimidazole-4-carboxamide-1-beta-d-ribofuranosyl 5'-monophosphate (FAICAR) in the absence of folates. This is 5-formaminoimidazole-4-carboxamide-1-(beta)-D-ribofuranosyl 5'-monophosphate synthetase from Archaeoglobus fulgidus (strain ATCC 49558 / DSM 4304 / JCM 9628 / NBRC 100126 / VC-16).